We begin with the raw amino-acid sequence, 551 residues long: Eukaryotic translation initiation factor 3 subunit D-2 (551 aa).

Residues 108–152 are disordered; sequence RARGRTGRGNATLGGLGGPVAGGSTANSTKYGKGRNTRNAQNMGR. Residues 119-128 are compositionally biased toward gly residues; that stretch reads TLGGLGGPVA. Residues 290–304 form an RNA gate region; it reads QFDLLTVNETSLEPP. Positions 530–551 are disordered; that stretch reads AFDSDGDDESESSEPFGNSIDN. Residues 531–541 show a composition bias toward acidic residues; the sequence is FDSDGDDESES.

The protein belongs to the eIF-3 subunit D family. Component of the eukaryotic translation initiation factor 3 (eIF-3) complex. The eIF-3 complex interacts with pix.

The protein resides in the cytoplasm. Functionally, mRNA cap-binding component of the eukaryotic translation initiation factor 3 (eIF-3) complex, which is involved in protein synthesis of a specialized repertoire of mRNAs and, together with other initiation factors, stimulates binding of mRNA and methionyl-tRNAi to the 40S ribosome. The eIF-3 complex specifically targets and initiates translation of a subset of mRNAs involved in cell proliferation. In the eIF-3 complex, eif3d specifically recognizes and binds the 7-methylguanosine cap of a subset of mRNAs. The polypeptide is Eukaryotic translation initiation factor 3 subunit D-2 (Drosophila yakuba (Fruit fly)).